The following is a 657-amino-acid chain: UvrABC system protein B (657 aa).

The Helicase ATP-binding domain maps to 25–182 (NSIKSNNRAQ…KKLIEIQYER (158 aa)). Residue 38–45 (GVTGSGKT) participates in ATP binding. Residues 91–114 (YYDYYQPEAYVPQTDTFIEKDASI) carry the Beta-hairpin motif. The region spanning 429 to 595 (QIDDLYGEIN…TIIKDVRDII (167 aa)) is the Helicase C-terminal domain. One can recognise a UVR domain in the interval 621-656 (DKLIKDLTEEMLLAAKNLQFERAAELRDIINEIKDG).

This sequence belongs to the UvrB family. Forms a heterotetramer with UvrA during the search for lesions. Interacts with UvrC in an incision complex.

It is found in the cytoplasm. In terms of biological role, the UvrABC repair system catalyzes the recognition and processing of DNA lesions. A damage recognition complex composed of 2 UvrA and 2 UvrB subunits scans DNA for abnormalities. Upon binding of the UvrA(2)B(2) complex to a putative damaged site, the DNA wraps around one UvrB monomer. DNA wrap is dependent on ATP binding by UvrB and probably causes local melting of the DNA helix, facilitating insertion of UvrB beta-hairpin between the DNA strands. Then UvrB probes one DNA strand for the presence of a lesion. If a lesion is found the UvrA subunits dissociate and the UvrB-DNA preincision complex is formed. This complex is subsequently bound by UvrC and the second UvrB is released. If no lesion is found, the DNA wraps around the other UvrB subunit that will check the other stand for damage. The sequence is that of UvrABC system protein B from Clostridium beijerinckii (strain ATCC 51743 / NCIMB 8052) (Clostridium acetobutylicum).